The primary structure comprises 40 residues: Alpha-1B-glycoprotein (40 aa).

N-linked (GlcNAc...) asparagine glycosylation is present at Asn-23.

In terms of assembly, interacts with CRISP3. Plasma.

The protein resides in the secreted. In Sus scrofa (Pig), this protein is Alpha-1B-glycoprotein (A1BG).